The sequence spans 245 residues: MGDSRALLDSEEYPNTEAQKDRVLTLEEWQEKWVNHKTGFHQEQGHQLLKKYLDTFLKGEKALRVFFPLCGKAVEMKWFADRGHSVVGVEISELGIRDFFTEQNLSYSEEPIMEIPGAKIFKSSSGNISLYCCNLFDLPRANIGKFDRIWDRGALVAVNPSDRKRYSDVMLSLTRPGFRYLLSVFSYDPTKHAGPPFYVTDGEVKKLFGSVCNIQCLEKVDVFEERHKSWGIDQIIERLYLFTEK.

Residue W29–F40 coordinates S-adenosyl-L-methionine. F40 serves as a coordination point for substrate. K58 is modified (N6-acetyllysine). Positions 69, 90, and 152 each coordinate S-adenosyl-L-methionine.

The protein belongs to the class I-like SAM-binding methyltransferase superfamily. TPMT family. Monomer.

The protein resides in the cytoplasm. It catalyses the reaction S-adenosyl-L-methionine + a thiopurine = S-adenosyl-L-homocysteine + a thiopurine S-methylether.. The protein is Thiopurine S-methyltransferase (TPMT) of Bos taurus (Bovine).